We begin with the raw amino-acid sequence, 196 residues long: Large ribosomal subunit protein bL9c (196 aa).

A chloroplast-targeting transit peptide spans 1-41; sequence MASTTSTLSLSWSNSFHSFAGAISEPQKSPENCRVMLPIVA.

In terms of assembly, component of the chloroplast large ribosomal subunit (LSU). Mature 70S chloroplast ribosomes of higher plants consist of a small (30S) and a large (50S) subunit. The 30S small subunit contains 1 molecule of ribosomal RNA (16S rRNA) and 24 different proteins. The 50S large subunit contains 3 rRNA molecules (23S, 5S and 4.5S rRNA) and 33 different proteins.

The protein resides in the plastid. Its subcellular location is the chloroplast. Functionally, component of the chloroplast ribosome (chloro-ribosome), a dedicated translation machinery responsible for the synthesis of chloroplast genome-encoded proteins, including proteins of the transcription and translation machinery and components of the photosynthetic apparatus. The sequence is that of Large ribosomal subunit protein bL9c (RPL9) from Spinacia oleracea (Spinach).